Reading from the N-terminus, the 86-residue chain is Small ribosomal subunit protein bS18 (86 aa).

It belongs to the bacterial ribosomal protein bS18 family. In terms of assembly, part of the 30S ribosomal subunit. Forms a tight heterodimer with protein bS6.

Functionally, binds as a heterodimer with protein bS6 to the central domain of the 16S rRNA, where it helps stabilize the platform of the 30S subunit. The protein is Small ribosomal subunit protein bS18 of Campylobacter curvus (strain 525.92).